Reading from the N-terminus, the 136-residue chain is Ciliary microtubule inner protein 1 (136 aa).

It is found in the cell projection. It localises to the cilium. The sequence is that of Ciliary microtubule inner protein 1 (Cimip1) from Mus musculus (Mouse).